A 232-amino-acid chain; its full sequence is Large ribosomal subunit protein uL1 (232 aa).

Belongs to the universal ribosomal protein uL1 family. As to quaternary structure, part of the 50S ribosomal subunit.

Binds directly to 23S rRNA. The L1 stalk is quite mobile in the ribosome, and is involved in E site tRNA release. Its function is as follows. Protein L1 is also a translational repressor protein, it controls the translation of the L11 operon by binding to its mRNA. This is Large ribosomal subunit protein uL1 from Thermosipho melanesiensis (strain DSM 12029 / CIP 104789 / BI429).